Here is a 298-residue protein sequence, read N- to C-terminus: uncharacterized protein (298 aa).

The next 10 helical transmembrane spans lie at 5–23 (ILVS…YFST), 33–52 (IFGY…VTLF), 72–91 (ALSY…LFLW), 101–120 (VSFG…RVFF), 127–145 (FKFI…NIVL), 149–166 (LSWE…YFSI), 175–194 (LASF…YFAL), 207–229 (FIWG…YVIA), 238–260 (LGLL…GEQI), and 265–284 (YPLF…DGVY). The EamA domain occupies 13–144 (FLFGYMYYFS…ATLGVISNIV (132 aa)).

This sequence belongs to the EamA transporter family.

It is found in the cell membrane. This is an uncharacterized protein from Haemophilus influenzae (strain ATCC 51907 / DSM 11121 / KW20 / Rd).